We begin with the raw amino-acid sequence, 833 residues long: MTFYNHKAIEPKWQAFWADNHTFKTGTDASKPKFYALDMFPYPSGAGLHVGHPEGYTATDILSRFKRAQGYNVLHPMGWDAFGLPAEQYAMDTGNDPAEFTAENIANFKRQINALGFSYDWDREINTTDPSYYKWTQWIFTKLYEKGLAYEAEVPVNWVEELGTAIANEEVLPDGTSERGGYPVVRKPMRQWMLKITAYAERLLADLEEVDWPESIKDMQRNWIGKSTGANVTFKVKDTDKDFTVFTTRPDTLFGATYAVLAPEHALVDSITTAEQAQAVAEYKRQASLKSDLARTDLAKEKTGVWTGAYAINPVNGKEMPIWIADYVLASYGTGAIMAVPAHDERDWAFAKQFNLEIIPVLEGGNVDEAAYTEDGIHINSDFLDGLDKACAIAKMVAWLEETGVGHEKVSYRLRDWLFSRQRYWGEPIPIIHWEDGTSTAVPEQDLPLVLPVTKDIRPSGTGESPLANLTDWLEVTREDGVKGRRETNTMPQWAGSSWYYLRYIDPHNDEQLADKDLLKQWLPVDIYIGGAEHAVLHLLYARFWHKVLYDLGVVPTKEPFQKLFNQGMILGTSYRDHRGALVATDKVDKRDGSFFHMETGEELEQAPAKMSKSLKNVVNPDDVVEQYGADTLRVYEMFMGPLDASIAWSEEGLEGARKFLDRVYRLITTKEIVAENSGALDKAYHETVKAVTEQIEGMKFNTAIAQLMIFVNAANKEDELYVAYAKGFVQLLAPFAPHLGEELWQILTASGQSISYVAWPTHDDSKLVENDVEIVVQIKGKVKAKLVVAKDLSREELEKVALAHDKIQAEIAGKEVAKVIVVPNKLVNIVVK.

The 'HIGH' region motif lies at 41-52; the sequence is PYPSGAGLHVGH. Positions 610–614 match the 'KMSKS' region motif; it reads KMSKS. ATP is bound at residue K613.

It belongs to the class-I aminoacyl-tRNA synthetase family.

Its subcellular location is the cytoplasm. The enzyme catalyses tRNA(Leu) + L-leucine + ATP = L-leucyl-tRNA(Leu) + AMP + diphosphate. The protein is Leucine--tRNA ligase of Streptococcus equi subsp. equi (strain 4047).